A 93-amino-acid chain; its full sequence is uncharacterized protein (93 aa).

The stretch at serine 36 to aspartate 69 forms a coiled coil.

This is an uncharacterized protein from Archaeoglobus fulgidus (strain ATCC 49558 / DSM 4304 / JCM 9628 / NBRC 100126 / VC-16).